The following is a 157-amino-acid chain: Peptide methionine sulfoxide reductase MsrA (157 aa).

Residue cysteine 10 is part of the active site.

This sequence belongs to the MsrA Met sulfoxide reductase family.

The enzyme catalyses L-methionyl-[protein] + [thioredoxin]-disulfide + H2O = L-methionyl-(S)-S-oxide-[protein] + [thioredoxin]-dithiol. The catalysed reaction is [thioredoxin]-disulfide + L-methionine + H2O = L-methionine (S)-S-oxide + [thioredoxin]-dithiol. Functionally, has an important function as a repair enzyme for proteins that have been inactivated by oxidation. Catalyzes the reversible oxidation-reduction of methionine sulfoxide in proteins to methionine. The protein is Peptide methionine sulfoxide reductase MsrA of Clostridium perfringens (strain SM101 / Type A).